A 336-amino-acid chain; its full sequence is Transcription factor MYB29 (336 aa).

HTH myb-type domains are found at residues glycine 9–isoleucine 65 and lysine 66–leucine 116. 2 DNA-binding regions (H-T-H motif) span residues tryptophan 37–leucine 61 and tryptophan 89–leucine 112. Positions lysine 127–aspartate 170 are disordered. The segment covering serine 141–serine 154 has biased composition (low complexity). Positions lysine 155–aspartate 164 are enriched in polar residues.

Can form complexes with MYC2, MYC3 or MYC4. As to expression, expressed in both vegetative and generative organs. Mostly present in seedlings, inflorescences, roots and stems, and, to a lower extent, in leaves (in midvein and trichomes) and siliques.

The protein resides in the nucleus. Its function is as follows. Plays a minor rheostat role in aliphatic glucosinolates (GLSs) biosynthesis, mostly short chained. Together with MYB28/HAG1 and MYB76/HAG2, promotes aliphatic glucosinolate biosynthesis but represses indolic glucosinolate biosynthesis. Prevents insect performance (e.g. lepidopteran insect Mamestra brassicae) by promoting glucosinolates. This Arabidopsis thaliana (Mouse-ear cress) protein is Transcription factor MYB29 (MYB29).